Here is a 409-residue protein sequence, read N- to C-terminus: Putative integrase/recombinase y4rA (409 aa).

The region spanning 112–197 (SAVEQHVQAY…ALRSFLSYAR (86 aa)) is the Core-binding (CB) domain. The 183-residue stretch at 220-402 (SIPRAIGRDD…DLDALRTLAL (183 aa)) folds into the Tyr recombinase domain. Active-site residues include Arg260, Lys284, His354, Arg357, and His380. The active-site O-(3'-phospho-DNA)-tyrosine intermediate is Tyr389.

This sequence belongs to the 'phage' integrase family.

This Sinorhizobium fredii (strain NBRC 101917 / NGR234) protein is Putative integrase/recombinase y4rA.